The chain runs to 35 residues: Antimicrobial peptide 3 (35 aa).

Residues 4–35 (GGECGGRFGGCAGGQCCSRFGFCGSGPKYCAH) form the Chitin-binding type-1 domain. 3 cysteine pairs are disulfide-bonded: Cys-7–Cys-20, Cys-14–Cys-26, and Cys-19–Cys-33.

Post-translationally, contains 3 disulfide bonds. As to expression, expressed in leaf, flower, stem and seed with highest expression in leaf (at protein level).

Functionally, has antifungal activity against A.niger (IC(50)=5.4 uM), B.sorokiniana (IC(50)=2.0 uM), B.cinerea (IC(50)=1.6 uM), F.solani (IC(50)=3.7 uM) and A.alternata (IC(50)=5.0 uM). Binds chitin in vitro. Has no antibacterial activity at concentrations up to 10 uM. The polypeptide is Antimicrobial peptide 3 (Stellaria media (Common chickweed)).